The following is an 84-amino-acid chain: Mu-conotoxin-like Cal 12.2b (84 aa).

Residues 1 to 19 (MKLTCVLVVLLLVLPFGDL) form the signal peptide. The propeptide occupies 20–42 (ITTSNTEDNKRGATPWQNSLKAR). Intrachain disulfides connect Cys45-Cys57, Cys52-Cys65, Cys59-Cys70, and Cys64-Cys76. Trp72 bears the 6'-bromotryptophan mark. Pro77 is modified (4-hydroxyproline). Trp81 is modified (6'-bromotryptophan).

It belongs to the conotoxin O1 superfamily. As to expression, expressed by the venom duct.

The protein resides in the secreted. Its function is as follows. Mu-conotoxins block voltage-gated sodium channels. This toxin reversibly blocks voltage-gated sodium channel in cephalopods, with no alteration in the voltage dependence of sodium conductance or on the kinetics of inactivation. This is Mu-conotoxin-like Cal 12.2b from Californiconus californicus (California cone).